The sequence spans 101 residues: Large ribosomal subunit protein uL24c (101 aa).

It belongs to the universal ribosomal protein uL24 family. Part of the 50S ribosomal subunit.

It is found in the plastid. The protein resides in the chloroplast. Its function is as follows. One of two assembly initiator proteins, it binds directly to the 5'-end of the 23S rRNA, where it nucleates assembly of the 50S subunit. In Guillardia theta (Cryptophyte), this protein is Large ribosomal subunit protein uL24c (rpl24).